A 263-amino-acid chain; its full sequence is Oxidoreductase UcpA (263 aa).

Residue 10–32 (LITGASQGIGEGIARVFARHGAN) participates in NAD(+) binding. Serine 141 contacts substrate. Tyrosine 155 acts as the Proton acceptor in catalysis.

The protein belongs to the short-chain dehydrogenases/reductases (SDR) family.

This chain is Oxidoreductase UcpA (ucpA), found in Salmonella typhi.